Reading from the N-terminus, the 463-residue chain is Arginine biosynthesis bifunctional protein ArgJ, chloroplastic (463 aa).

Substrate-binding residues include threonine 207, lysine 233, threonine 244, glutamate 331, asparagine 458, and threonine 463. The active-site Nucleophile is the threonine 244.

The protein belongs to the ArgJ family. In terms of assembly, heterodimer of an alpha and a beta chain.

Its subcellular location is the plastid. It localises to the chloroplast. The catalysed reaction is N(2)-acetyl-L-ornithine + L-glutamate = N-acetyl-L-glutamate + L-ornithine. It carries out the reaction L-glutamate + acetyl-CoA = N-acetyl-L-glutamate + CoA + H(+). Its pathway is amino-acid biosynthesis; L-arginine biosynthesis; L-ornithine and N-acetyl-L-glutamate from L-glutamate and N(2)-acetyl-L-ornithine (cyclic): step 1/1. The protein operates within amino-acid biosynthesis; L-arginine biosynthesis; N(2)-acetyl-L-ornithine from L-glutamate: step 1/4. In terms of biological role, catalyzes two activities which are involved in the cyclic version of arginine biosynthesis: the synthesis of acetylglutamate from glutamate and acetyl-CoA, and of ornithine by transacetylation between acetylornithine and glutamate. In Oryza sativa subsp. japonica (Rice), this protein is Arginine biosynthesis bifunctional protein ArgJ, chloroplastic.